Here is a 352-residue protein sequence, read N- to C-terminus: UDP-3-O-acylglucosamine N-acyltransferase (352 aa).

Catalysis depends on histidine 246, which acts as the Proton acceptor.

Belongs to the transferase hexapeptide repeat family. LpxD subfamily. As to quaternary structure, homotrimer.

The enzyme catalyses a UDP-3-O-[(3R)-3-hydroxyacyl]-alpha-D-glucosamine + a (3R)-hydroxyacyl-[ACP] = a UDP-2-N,3-O-bis[(3R)-3-hydroxyacyl]-alpha-D-glucosamine + holo-[ACP] + H(+). The protein operates within bacterial outer membrane biogenesis; LPS lipid A biosynthesis. Its function is as follows. Catalyzes the N-acylation of UDP-3-O-acylglucosamine using 3-hydroxyacyl-ACP as the acyl donor. Is involved in the biosynthesis of lipid A, a phosphorylated glycolipid that anchors the lipopolysaccharide to the outer membrane of the cell. This is UDP-3-O-acylglucosamine N-acyltransferase from Chlorobium luteolum (strain DSM 273 / BCRC 81028 / 2530) (Pelodictyon luteolum).